We begin with the raw amino-acid sequence, 167 residues long: NADH-quinone oxidoreductase subunit E (167 aa).

C91, C96, C132, and C136 together coordinate [2Fe-2S] cluster.

It belongs to the complex I 24 kDa subunit family. Requires [2Fe-2S] cluster as cofactor.

It carries out the reaction a quinone + NADH + 5 H(+)(in) = a quinol + NAD(+) + 4 H(+)(out). Its function is as follows. NDH-1 shuttles electrons from NADH, via FMN and iron-sulfur (Fe-S) centers, to quinones in the respiratory chain. Couples the redox reaction to proton translocation (for every two electrons transferred, four hydrogen ions are translocated across the cytoplasmic membrane), and thus conserves the redox energy in a proton gradient. This is NADH-quinone oxidoreductase subunit E (nuoE) from Rickettsia bellii (strain RML369-C).